The following is a 951-amino-acid chain: Serine/threonine-protein phosphatase 4 regulatory subunit 1 (951 aa).

8 HEAT repeats span residues 26–63 (ESDVIIIPSALDFVSQDEMLTPLGRLDKYAASENVFNR), 65–81 (MVARSLLDTLREVCDDE), 82–119 (RDCIAVLERISRLADDSEPTVRAELMEQVPHIALFCQE), 127–164 (AFSKYLLPIVVRYLADQNNQVRKTSQAALLALLEQELI), 168–206 (DVETKVCPVLIDLTAPDSNDDVKTEAVAIMCKMAPMVGK), 208–246 (ITERLILPRFCEMCCDCRMFHVRKVCAANFGDICSVVGQ), 248–285 (ATEEMLLPRFFQLCSDNVWGVRKACAECFMAVSCATCQ), and 287–324 (IRRTKLSALFINLISDPSRWVRQAAFQSLGPFISTFAN). Disordered regions lie at residues 325–377 (PSSS…HSSA), 411–451 (SESP…PLDQ), and 474–499 (QQDPEERLSPERTGDVPAAPLPGPPN). Positions 332-365 (FKDESKSSEDSSAEDKDRMRDNDVVEEEHRRPED) are enriched in basic and acidic residues. Polar residues-rich tracts occupy residues 411–421 (SESPQEAASND) and 430–445 (NSKSASRPDAGTSSPE). Basic and acidic residues predominate over residues 474–487 (QQDPEERLSPERTG). An HEAT 9 repeat occupies 506–543 (KELEEMIENLEPHMDDPDVKAQVDVLSAALRASSLDAH). The interval 590–612 (DYVHGGADVSPGDGFSPDEDRRP) is disordered. HEAT repeat units follow at residues 699–735 (LTAADLVPIFNGFLKDLDEVRIGVLKHLHDFLKLLHI), 800–838 (WISYKLVSEMVKKLHTATPPTFGVDLINELVENFGRCPK), and 862–899 (QFAVHLMPHLLTLANDRVPNVRVLLAKTLRQTLLEKEY). At Ser-936 the chain carries Phosphoserine.

Serine/threonine-protein phosphatase 4 (PP4) occurs in different assemblies of the catalytic and one or more regulatory subunits. Component of the PP4 complex PPP4C-PPP4R1. Interacts with HDAC3.

Regulatory subunit of serine/threonine-protein phosphatase 4. May play a role in regulation of cell division in renal glomeruli. The PPP4C-PPP4R1 PP4 complex may play a role in dephosphorylation and regulation of HDAC3. Plays a role in the inhibition of TNF-induced NF-kappa-B activation by regulating the dephosphorylation of TRAF2. In Mus musculus (Mouse), this protein is Serine/threonine-protein phosphatase 4 regulatory subunit 1 (Ppp4r1).